We begin with the raw amino-acid sequence, 537 residues long: MLMYRRDFLKSVTAAWVAFGLPNPLGGAFATNRVIALRRLGQSQRFDYELLKERARALAAAPYHSRKRVLPTPLERLSWDQYQSIRYRQDHALWADSDAHFQVKFFHLGLYFHSPVRMYEVVDGMAQELAYDPAAFDYGSSGLNGKGLPKDLGFAGFRLNTRKDTDRDFAAFLGASYFRAVGQEGQYGQSARGLAVNTGSSGPEEFPDFIAYYLEQPTSDADTVVMYGLLDSPSIAGAYRFSITHADVLRMDIDSALYPRETIERLGIAPCTSMYQVGENDRRMGWDWRPEIHDTDGLFLWTGNGEWIWRPLCNPLHLRFNMFLDNNPRGFGLLQRDRDFDHYQDDGVFYEKRPCLWVEPKHGWGEGSVQLVEIPTFDETFDNIVAFWNPRNKPHPGQELLFGYRLYWGALPPVSSSLAYCVATRTGLGGVVGQKRKYFSWRFAVDFVGGKLAALARVHDVSVEPVLHMTRGRPEIVSARPLHEIRGYRVMFDVVPLEDSAQQIDIRLYLRDTNGEPLTETWLYQWMPPILEERKIY.

Residues 1–30 (MLMYRRDFLKSVTAAWVAFGLPNPLGGAFA) constitute a signal peptide (tat-type signal).

The protein belongs to the OpgD/OpgG family. Predicted to be exported by the Tat system. The position of the signal peptide cleavage has not been experimentally proven.

The protein resides in the periplasm. It functions in the pathway glycan metabolism; osmoregulated periplasmic glucan (OPG) biosynthesis. In terms of biological role, probably involved in the control of the structural glucose backbone of osmoregulated periplasmic glucans (OPGs). The chain is Glucans biosynthesis protein D from Xylella fastidiosa (strain M12).